The chain runs to 2604 residues: Probable polyketide synthase 17 (2604 aa).

Positions 11–433 constitute a Ketosynthase family 3 (KS3) domain; that stretch reads NDDIAIIGMG…GSNCHMILSE (423 aa). Residues C179, H316, and H356 each act as for beta-ketoacyl synthase activity in the active site. The acyl/malonyl transferases stretch occupies residues 631-664; it reads GISPSIVVGHSFGEIPSALFSDVISLETAVKIVY. The For acyl/malonyl transferase activity role is filled by S641. An N-terminal hotdog fold region spans residues 937–1057; sequence NNLLGHDQFA…GRIGLFKHNP (121 aa). A PKS/mFAS DH domain is found at 937–1216; sequence NNLLGHDQFA…CTSLIRLKKQ (280 aa). H968 serves as the catalytic Proton acceptor; for dehydratase activity. Positions 1072–1216 are C-terminal hotdog fold; sequence SFTTLTKSEV…CTSLIRLKKQ (145 aa). D1132 acts as the Proton donor; for dehydratase activity in catalysis. A disordered region spans residues 1357-1407; it reads GESEHFSPSNPSSPNDTPRNNSNNCSSKNNAASSDDADDDTNNEETINQLN. Over residues 1363-1390 the composition is skewed to low complexity; sequence SPSNPSSPNDTPRNNSNNCSSKNNAASS. The region spanning 2507–2584 is the Carrier domain; that stretch reads GDSGSTQAKV…SIIQRISSKS (78 aa). An O-(pantetheine 4'-phosphoryl)serine modification is found at S2544. Positions 2581 to 2597 are enriched in low complexity; that stretch reads SSKSTSTSTPNPTNTSK. Residues 2581 to 2604 are disordered; the sequence is SSKSTSTSTPNPTNTSKQTATKKT.

Requires pantetheine 4'-phosphate as cofactor.

In terms of biological role, probable polyketide synthase. The sequence is that of Probable polyketide synthase 17 (pks17) from Dictyostelium discoideum (Social amoeba).